Here is a 60-residue protein sequence, read N- to C-terminus: Large ribosomal subunit protein uL30 (60 aa).

The protein belongs to the universal ribosomal protein uL30 family. As to quaternary structure, part of the 50S ribosomal subunit.

In Thermus thermophilus (strain ATCC BAA-163 / DSM 7039 / HB27), this protein is Large ribosomal subunit protein uL30.